Reading from the N-terminus, the 217-residue chain is Ras-related protein Rab-19 (217 aa).

Residues Ser-26, Val-28, Gly-29, Lys-30, Thr-31, Cys-32, Tyr-42, Ser-43, Glu-44, Ser-45, and Thr-49 each contribute to the GTP site. Thr-31 contacts Mg(2+). A Switch 1 motif is present at residues 39-54; sequence SGVYSESQQNTIGVDF. Mg(2+) is bound by residues Thr-49 and Asp-72. The Switch 2 motif lies at 74-89; that stretch reads AGQERFRTITQSYYRS. GTP is bound by residues Gly-75, Asn-130, Lys-131, Asp-133, Ser-161, Ala-162, and Lys-163. S-geranylgeranyl cysteine attachment occurs at residues Cys-215 and Cys-217. The residue at position 217 (Cys-217) is a Cysteine methyl ester.

This sequence belongs to the small GTPase superfamily. Rab family. Mg(2+) is required as a cofactor.

It is found in the cell membrane. The catalysed reaction is GTP + H2O = GDP + phosphate + H(+). Its activity is regulated as follows. Regulated by guanine nucleotide exchange factors (GEFs) which promote the exchange of bound GDP for free GTP. Regulated by GTPase activating proteins (GAPs) which increase the GTP hydrolysis activity. Inhibited by GDP dissociation inhibitors (GDIs). The small GTPases Rab are key regulators of intracellular membrane trafficking, from the formation of transport vesicles to their fusion with membranes. Rabs cycle between an inactive GDP-bound form and an active GTP-bound form that is able to recruit to membranes different set of downstream effectors directly responsible for vesicle formation, movement, tethering and fusion. This chain is Ras-related protein Rab-19, found in Rattus norvegicus (Rat).